A 149-amino-acid polypeptide reads, in one-letter code: Ribosome maturation factor RimP (149 aa).

It belongs to the RimP family.

It localises to the cytoplasm. Its function is as follows. Required for maturation of 30S ribosomal subunits. The polypeptide is Ribosome maturation factor RimP (Sulfurimonas denitrificans (strain ATCC 33889 / DSM 1251) (Thiomicrospira denitrificans (strain ATCC 33889 / DSM 1251))).